The following is a 1111-amino-acid chain: Isoleucine--tRNA ligase (1111 aa).

Residues 52-62 (PFANGLPHYGH) carry the 'HIGH' region motif. Residues 645-649 (KLSKR) carry the 'KMSKS' region motif. ATP is bound at residue lysine 648.

This sequence belongs to the class-I aminoacyl-tRNA synthetase family. IleS type 2 subfamily. Monomer. Requires Zn(2+) as cofactor.

It is found in the cytoplasm. It carries out the reaction tRNA(Ile) + L-isoleucine + ATP = L-isoleucyl-tRNA(Ile) + AMP + diphosphate. Catalyzes the attachment of isoleucine to tRNA(Ile). As IleRS can inadvertently accommodate and process structurally similar amino acids such as valine, to avoid such errors it has two additional distinct tRNA(Ile)-dependent editing activities. One activity is designated as 'pretransfer' editing and involves the hydrolysis of activated Val-AMP. The other activity is designated 'posttransfer' editing and involves deacylation of mischarged Val-tRNA(Ile). This chain is Isoleucine--tRNA ligase, found in Wolbachia pipientis wMel.